The chain runs to 204 residues: MKFNATARSVQGSSASRRLRRAGRVPAIVYGGTAAPLNIELDHNEIYHALRKEEFHASILNMVIEGGKTEEVLLRSVQWHAYKPQVMHVDFQRVDANQALHTKVPLHFINAEVSPAVKLSGAIISHVLTELDITCLPALLPQFIEVNLGDLLGGGSIHLADIKLPKGVTFNAHGGDTNPLIAAAVVKGGGAADEGDAAAEQPAA.

The protein belongs to the bacterial ribosomal protein bL25 family. CTC subfamily. In terms of assembly, part of the 50S ribosomal subunit; part of the 5S rRNA/L5/L18/L25 subcomplex. Contacts the 5S rRNA. Binds to the 5S rRNA independently of L5 and L18.

Its function is as follows. This is one of the proteins that binds to the 5S RNA in the ribosome where it forms part of the central protuberance. The polypeptide is Large ribosomal subunit protein bL25 (Bordetella bronchiseptica (strain ATCC BAA-588 / NCTC 13252 / RB50) (Alcaligenes bronchisepticus)).